Reading from the N-terminus, the 447-residue chain is Protein disulfide-isomerase like 2-2 (447 aa).

Residues 1–26 (MERKMYKSTVFPICCLLFALFDRGNA) form the signal peptide. Thioredoxin domains are found at residues 27 to 139 (LYGS…QIKA) and 161 to 275 (KKKS…QLES). Residues Cys-62 and Cys-65 each act as nucleophile in the active site. Cys-62 and Cys-65 are joined by a disulfide. The tract at residues 146 to 170 (DGKTSGTKNGGGSSEKKKSEPSASV) is disordered. N-linked (GlcNAc...) asparagine glycosylation occurs at Asn-173. Residues Cys-197 and Cys-200 each act as nucleophile in the active site. A disulfide bridge connects residues Cys-197 and Cys-200. The short motif at 444 to 447 (KDDL) is the Prevents secretion from ER element.

This sequence belongs to the protein disulfide isomerase family. In terms of tissue distribution, widely expressed.

The protein resides in the endoplasmic reticulum lumen. The catalysed reaction is Catalyzes the rearrangement of -S-S- bonds in proteins.. Functionally, acts as a protein-folding catalyst that interacts with nascent polypeptides to catalyze the formation, isomerization, and reduction or oxidation of disulfide bonds. This Arabidopsis thaliana (Mouse-ear cress) protein is Protein disulfide-isomerase like 2-2 (PDIL2-2).